Here is a 526-residue protein sequence, read N- to C-terminus: Nuclear pore glycoprotein p62 (526 aa).

Position 2 is an N-acetylserine (Ser2). Tandem repeats lie at residues 6-7 (FG), 46-47 (FG), 78-79 (FG), and 115-116 (FG). The interval 6–144 (FGGTGAPAGG…GTAPTGFVFG (139 aa)) is 5 X 2 AA repeats of F-G. Positions 43 to 82 (GFNFGTPSQPAATTPSTSLFSLTTQTPTTQTPGFNFGTTP) are disordered. A compositionally biased stretch (low complexity) spans 46 to 81 (FGTPSQPAATTPSTSLFSLTTQTPTTQTPGFNFGTT). Residues 128–137 (SGSTSNQGTA) show a composition bias toward polar residues. A disordered region spans residues 128-148 (SGSTSNQGTAPTGFVFGSSTT). Repeat unit 5 spans residues 143-144 (FG). Residues 332 to 462 (MTYAQLESLI…QDLKDIIEHL (131 aa)) are required for centrosome localization. Positions 332–462 (MTYAQLESLI…QDLKDIIEHL (131 aa)) form a coiled coil. A glycan (O-linked (GlcNAc) threonine) is linked at Thr377. A phosphoserine mark is found at Ser412 and Ser422. A glycan (O-linked (GlcNAc) serine) is linked at Ser472.

This sequence belongs to the nucleoporin NSP1/NUP62 family. As to quaternary structure, component of the p62 complex, a complex at least composed of NUP62, NUP54, and NUP58. Interacts with NUP88. Interacts with NUTF2. Interacts with HIKESHI. Interacts with OSBPL8. Interacts with CAPG. Interacts with SAS6 and TUBG1 at the centrosome. Interacts with MCM3AP. O-glycosylated. Post-translationally, the inner channel of the NPC has a different redox environment from the cytoplasm and allows the formation of interchain disulfide bonds between some nucleoporins, the significant increase of these linkages upon oxidative stress reduces the permeability of the NPC.

The protein resides in the nucleus. The protein localises to the nuclear pore complex. It localises to the cytoplasm. Its subcellular location is the cytoskeleton. It is found in the spindle pole. The protein resides in the nucleus envelope. The protein localises to the microtubule organizing center. It localises to the centrosome. Essential component of the nuclear pore complex. The N-terminal is probably involved in nucleocytoplasmic transport. The C-terminal is involved in protein-protein interaction probably via coiled-coil formation, promotes its association with centrosomes and may function in anchorage of p62 to the pore complex. Plays a role in mitotic cell cycle progression by regulating centrosome segregation, centriole maturation and spindle orientation. It might be involved in protein recruitment to the centrosome after nuclear breakdown. In Mus musculus (Mouse), this protein is Nuclear pore glycoprotein p62 (Nup62).